Here is a 68-residue protein sequence, read N- to C-terminus: Small cysteine-rich protein 5 (68 aa).

A signal peptide spans 1 to 24 (MAVKFHLCLLLIILVGMGAHVAFA).

The protein belongs to the Cnidaria small cysteine-rich protein (SCRiP) family. gamma subfamily. Contains 4 disulfide bonds.

The protein resides in the secreted. The protein localises to the nematocyst. Functionally, induces neurotoxic symptoms on zebrafish. Has also been claimed to be implied in calcification, but tests on homolog proteins suggest that proteins of this family have a neurotoxic function and not a calcification function. This chain is Small cysteine-rich protein 5, found in Orbicella faveolata (Mountainous star coral).